An 82-amino-acid polypeptide reads, in one-letter code: UPF0291 protein LVIS_1359 (82 aa).

It belongs to the UPF0291 family.

It is found in the cytoplasm. The protein is UPF0291 protein LVIS_1359 of Levilactobacillus brevis (strain ATCC 367 / BCRC 12310 / CIP 105137 / JCM 1170 / LMG 11437 / NCIMB 947 / NCTC 947) (Lactobacillus brevis).